We begin with the raw amino-acid sequence, 239 residues long: 7-cyano-7-deazaguanine synthase (239 aa).

16-26 (FSGGQDSTTCL) provides a ligand contact to ATP. The Zn(2+) site is built by cysteine 204, cysteine 219, cysteine 222, and cysteine 225.

Belongs to the QueC family. Zn(2+) is required as a cofactor.

The enzyme catalyses 7-carboxy-7-deazaguanine + NH4(+) + ATP = 7-cyano-7-deazaguanine + ADP + phosphate + H2O + H(+). Its pathway is purine metabolism; 7-cyano-7-deazaguanine biosynthesis. In terms of biological role, catalyzes the ATP-dependent conversion of 7-carboxy-7-deazaguanine (CDG) to 7-cyano-7-deazaguanine (preQ(0)). In Polaromonas naphthalenivorans (strain CJ2), this protein is 7-cyano-7-deazaguanine synthase.